The following is a 180-amino-acid chain: Dual-action ribosomal maturation protein DarP (180 aa).

The span at 1 to 13 (MKPDKTENTEHGI) shows a compositional bias: basic and acidic residues. Positions 1–21 (MKPDKTENTEHGIEPVSKTKR) are disordered.

The protein belongs to the DarP family.

It localises to the cytoplasm. Its function is as follows. Member of a network of 50S ribosomal subunit biogenesis factors which assembles along the 30S-50S interface, preventing incorrect 23S rRNA structures from forming. Promotes peptidyl transferase center (PTC) maturation. This is Dual-action ribosomal maturation protein DarP from Methylobacillus flagellatus (strain ATCC 51484 / DSM 6875 / VKM B-1610 / KT).